The sequence spans 103 residues: Large ribosomal subunit protein eL14 (103 aa).

This sequence belongs to the eukaryotic ribosomal protein eL14 family.

The polypeptide is Large ribosomal subunit protein eL14 (Pyrobaculum neutrophilum (strain DSM 2338 / JCM 9278 / NBRC 100436 / V24Sta) (Thermoproteus neutrophilus)).